Consider the following 181-residue polypeptide: tRNA (cytidine(56)-2'-O)-methyltransferase (181 aa).

Residues leucine 88, 115 to 119 (GGEKV), and 133 to 140 (IGNQPHSE) each bind S-adenosyl-L-methionine.

Belongs to the aTrm56 family. Homodimer.

The protein resides in the cytoplasm. It catalyses the reaction cytidine(56) in tRNA + S-adenosyl-L-methionine = 2'-O-methylcytidine(56) in tRNA + S-adenosyl-L-homocysteine + H(+). Specifically catalyzes the AdoMet-dependent 2'-O-ribose methylation of cytidine at position 56 in tRNAs. This Thermofilum pendens (strain DSM 2475 / Hrk 5) protein is tRNA (cytidine(56)-2'-O)-methyltransferase.